Here is a 141-residue protein sequence, read N- to C-terminus: MAKKVVALIKLALPAGKANPAPPVGPALGQHGVNIMAFCKEYNAKTADKPGMIIPVEISVFEDRSFTFILKTPPASVLIRKAAGVEKGSSEPNKNKVASITREQLREIAQTKLPDLNANDIDAAMNIIEGTARNMGITVNS.

It belongs to the universal ribosomal protein uL11 family. Part of the ribosomal stalk of the 50S ribosomal subunit. Interacts with L10 and the large rRNA to form the base of the stalk. L10 forms an elongated spine to which L12 dimers bind in a sequential fashion forming a multimeric L10(L12)X complex. Post-translationally, one or more lysine residues are methylated.

Functionally, forms part of the ribosomal stalk which helps the ribosome interact with GTP-bound translation factors. The chain is Large ribosomal subunit protein uL11 from Synechocystis sp. (strain ATCC 27184 / PCC 6803 / Kazusa).